Consider the following 466-residue polypeptide: UDP-N-acetylmuramate--L-alanine ligase (466 aa).

An ATP-binding site is contributed by 114-120; it reads GTHGKTT.

It belongs to the MurCDEF family.

The protein resides in the cytoplasm. The catalysed reaction is UDP-N-acetyl-alpha-D-muramate + L-alanine + ATP = UDP-N-acetyl-alpha-D-muramoyl-L-alanine + ADP + phosphate + H(+). It participates in cell wall biogenesis; peptidoglycan biosynthesis. Its function is as follows. Cell wall formation. The chain is UDP-N-acetylmuramate--L-alanine ligase from Chlorobium phaeobacteroides (strain DSM 266 / SMG 266 / 2430).